We begin with the raw amino-acid sequence, 636 residues long: Eisosome protein sle1 (636 aa).

The segment at 1–297 (MSHASKNYNA…HVIIYENKEG (297 aa)) is required for targeting the protein to eisosomes. Disordered stretches follow at residues 111-205 (ANYM…SPAN), 222-284 (YSPS…VPPV), 313-387 (DPSG…TQHF), 400-451 (QYYQ…QPSL), 467-550 (DITP…VNNA), and 572-604 (PSNH…RFAN). Polar residues-rich tracts occupy residues 131–159 (PSQQ…QSYQ), 166–178 (RTSQ…NNYS), 188–204 (RRSS…GSPA), 237–255 (SYNN…TQKS), and 315–354 (SGSN…VVSR). A compositionally biased stretch (low complexity) spans 355–383 (SGQNNNQPAQPGQYNQQSQPVQSYQSGQS). 2 stretches are compositionally biased toward polar residues: residues 400-412 (QYYQ…QPVQ) and 422-439 (PVQS…QPVQ). Over residues 471–484 (TASSTTANNAYASA) the composition is skewed to low complexity. The segment covering 503–512 (SFERERDSGR) has biased composition (basic and acidic residues). A compositionally biased stretch (polar residues) spans 572 to 589 (PSNHAYSEGRSYTFTGGQ).

As to quaternary structure, component of eisosomes, large cytoplasmic protein assemblies that localize to specialized domains termed MCCs on the plasma membrane.

Its subcellular location is the cytoplasm. The protein localises to the cell cortex. It is found in the cell tip. Its function is as follows. Important for the biogenesis of filamentous eisosomes, large cytoplasmic protein assemblies that localize to specialized domains on the plasma membrane to cluster specific proteins at sites of membrane invaginations. The sequence is that of Eisosome protein sle1 (sle1) from Schizosaccharomyces pombe (strain 972 / ATCC 24843) (Fission yeast).